The chain runs to 343 residues: Heat-inducible transcription repressor HrcA (343 aa).

It belongs to the HrcA family.

Its function is as follows. Negative regulator of class I heat shock genes (grpE-dnaK-dnaJ and groELS operons). Prevents heat-shock induction of these operons. This chain is Heat-inducible transcription repressor HrcA, found in Clostridium acetobutylicum (strain ATCC 824 / DSM 792 / JCM 1419 / IAM 19013 / LMG 5710 / NBRC 13948 / NRRL B-527 / VKM B-1787 / 2291 / W).